A 109-amino-acid polypeptide reads, in one-letter code: Aquaporin-2 (109 aa).

Topologically, residues 1 to 6 (SIAFSK) are cytoplasmic. A helical membrane pass occupies residues 7–27 (AVFSEFLATLLFVFFGLGSAL). The Extracellular portion of the chain corresponds to 28–35 (NWPQALPS). A helical membrane pass occupies residues 36-54 (GLQIAMAFGLAIGTLVQTL). Residues 55–59 (GHISG) are Cytoplasmic-facing. Positions 60–69 (AHINPAVTVA) form an intramembrane region, discontinuously helical. The short motif at 63–65 (NPA) is the NPA 1 element. Topologically, residues 70 to 80 (CLVGCHVSFLR) are cytoplasmic. Residues 81–102 (AIFYVAAQLLGAVAGAALLHEL) traverse the membrane as a helical segment. Over 103–109 (TPPDIRG) the chain is Extracellular.

This sequence belongs to the MIP/aquaporin (TC 1.A.8) family. Homotetramer. Serine phosphorylation is necessary and sufficient for expression at the apical membrane. Endocytosis is not phosphorylation-dependent. In terms of processing, N-glycosylated.

It is found in the apical cell membrane. The protein localises to the basolateral cell membrane. Its subcellular location is the cell membrane. It localises to the cytoplasmic vesicle membrane. The protein resides in the golgi apparatus. It is found in the trans-Golgi network membrane. It carries out the reaction H2O(in) = H2O(out). The catalysed reaction is glycerol(in) = glycerol(out). Functionally, forms a water-specific channel that provides the plasma membranes of renal collecting duct with high permeability to water, thereby permitting water to move in the direction of an osmotic gradient. Plays an essential role in renal water homeostasis. Could also be permeable to glycerol. The polypeptide is Aquaporin-2 (Orycteropus afer (Aardvark)).